Reading from the N-terminus, the 179-residue chain is Adenine phosphoribosyltransferase (179 aa).

The protein belongs to the purine/pyrimidine phosphoribosyltransferase family. As to quaternary structure, homodimer.

It localises to the cytoplasm. It carries out the reaction AMP + diphosphate = 5-phospho-alpha-D-ribose 1-diphosphate + adenine. The protein operates within purine metabolism; AMP biosynthesis via salvage pathway; AMP from adenine: step 1/1. Catalyzes a salvage reaction resulting in the formation of AMP, that is energically less costly than de novo synthesis. This chain is Adenine phosphoribosyltransferase, found in Ruegeria pomeroyi (strain ATCC 700808 / DSM 15171 / DSS-3) (Silicibacter pomeroyi).